The chain runs to 253 residues: Chitooligosaccharide deacetylase (253 aa).

Residues His-61 and His-126 each coordinate Mg(2+).

The protein belongs to the YdjC deacetylase family. ChbG subfamily. As to quaternary structure, homodimer. Requires Mg(2+) as cofactor.

It localises to the cytoplasm. The catalysed reaction is N,N'-diacetylchitobiose + H2O = N-acetyl-beta-D-glucosaminyl-(1-&gt;4)-D-glucosamine + acetate. It carries out the reaction diacetylchitobiose-6'-phosphate + H2O = N'-monoacetylchitobiose-6'-phosphate + acetate. It functions in the pathway glycan degradation; chitin degradation. Involved in the degradation of chitin. ChbG is essential for growth on the acetylated chitooligosaccharides chitobiose and chitotriose but is dispensable for growth on cellobiose and chitosan dimer, the deacetylated form of chitobiose. Deacetylation of chitobiose-6-P and chitotriose-6-P is necessary for both the activation of the chb promoter by the regulatory protein ChbR and the hydrolysis of phosphorylated beta-glucosides by the phospho-beta-glucosidase ChbF. Catalyzes the removal of only one acetyl group from chitobiose-6-P to yield monoacetylchitobiose-6-P, the inducer of ChbR and the substrate of ChbF. The polypeptide is Chitooligosaccharide deacetylase (Serratia marcescens).